Consider the following 461-residue polypeptide: Transcriptional activator RocR (461 aa).

Asp57 carries the post-translational modification 4-aspartylphosphate. Positions 143–372 (ILGTSPAIQD…EHMIEGAMNF (230 aa)) constitute a Sigma-54 factor interaction domain. Residues 171–178 (GETGTGKE) and 233–242 (AHGGTLLLDE) contribute to the ATP site. A DNA-binding region (H-T-H motif) is located at residues 434–453 (ISKAAQELGISRQSLQYRLK).

Functionally, positive regulator of arginine catabolism. Controls the transcription of the two operons rocABC and rocDEF and probably acts by binding to the corresponding upstream activating sequences. The protein is Transcriptional activator RocR (rocR) of Bacillus subtilis (strain 168).